Reading from the N-terminus, the 437-residue chain is MGLPVVAIVGRPNVGKSTIFNRLIGERVAIVEDMPGVTRDRLYGKGEWLTHTFHVIDTGGIEFGETDEILTQMRYQAELAIDEADVIIMIADSRTGVTDADVELSRMLNRTGKPVVLAVNKADNPEMRADIYDFYSLGLGEPFPVSGSHGLGLGDMLEEVCQHFPAEDDEEKRDDVIRVSIIGRPNVGKSSLTNAILGEERVIVSEVAGTTRDAIDTPFERDDQSYVLVDTAGMRKRGKVYETTEKYSVMRAMRSIEDSDVVLVVINGEEGIIEQDKKIAGYAHEAGRGVIIIVNKWDAIEKDDKTMQRFTELIREEFKYLDYAPILYVSAKSKQRVHTILPKVNEVAQAHSMRIPTAVLNDLVTDATIRTPPPSDRGKRLKINYATQATVKPPTFILFVNDPELMHFSYERYIENKIREAFVFEGTPVRIWTRKKT.

EngA-type G domains are found at residues 4–168 (PVVA…PAED) and 177–352 (IRVS…QAHS). GTP is bound by residues 10–17 (GRPNVGKS), 57–61 (DTGGI), 120–123 (NKAD), 183–190 (GRPNVGKS), 230–234 (DTAGM), and 295–298 (NKWD). The 85-residue stretch at 353–437 (MRIPTAVLND…PVRIWTRKKT (85 aa)) folds into the KH-like domain.

It belongs to the TRAFAC class TrmE-Era-EngA-EngB-Septin-like GTPase superfamily. EngA (Der) GTPase family. Associates with the 50S ribosomal subunit.

In terms of biological role, GTPase that plays an essential role in the late steps of ribosome biogenesis. The polypeptide is GTPase Der (Brevibacillus brevis (strain 47 / JCM 6285 / NBRC 100599)).